Reading from the N-terminus, the 120-residue chain is Ribosome-binding factor A (120 aa).

It belongs to the RbfA family. As to quaternary structure, monomer. Binds 30S ribosomal subunits, but not 50S ribosomal subunits or 70S ribosomes.

The protein localises to the cytoplasm. Functionally, one of several proteins that assist in the late maturation steps of the functional core of the 30S ribosomal subunit. Associates with free 30S ribosomal subunits (but not with 30S subunits that are part of 70S ribosomes or polysomes). Required for efficient processing of 16S rRNA. May interact with the 5'-terminal helix region of 16S rRNA. This chain is Ribosome-binding factor A, found in Verminephrobacter eiseniae (strain EF01-2).